Consider the following 249-residue polypeptide: 3-deoxy-D-manno-octulosonic acid kinase (249 aa).

Asp175 is a catalytic residue.

This sequence belongs to the protein kinase superfamily. KdkA/RfaP family.

It is found in the cell inner membrane. The catalysed reaction is an alpha-Kdo-(2-&gt;6)-lipid IVA + ATP = a 4-O-phospho-alpha-Kdo-(2-&gt;6)-lipid IVA + ADP + H(+). The protein operates within bacterial outer membrane biogenesis; LPS core biosynthesis. Functionally, catalyzes the ATP-dependent phosphorylation of the 3-deoxy-D-manno-octulosonic acid (Kdo) residue in Kdo-lipid IV(A) at the 4-OH position. In Stenotrophomonas maltophilia (strain K279a), this protein is 3-deoxy-D-manno-octulosonic acid kinase.